Consider the following 398-residue polypeptide: 1-deoxy-D-xylulose 5-phosphate reductoisomerase (398 aa).

Residues Thr-21, Gly-22, Ser-23, Ile-24, Gly-47, Asn-50, and Asn-127 each coordinate NADPH. Lys-128 lines the 1-deoxy-D-xylulose 5-phosphate pocket. An NADPH-binding site is contributed by Glu-129. Asp-151 is a Mn(2+) binding site. Positions 152, 153, 177, and 200 each coordinate 1-deoxy-D-xylulose 5-phosphate. Glu-153 contacts Mn(2+). Position 206 (Gly-206) interacts with NADPH. 1-deoxy-D-xylulose 5-phosphate-binding residues include Ser-213, Asn-218, Lys-219, and Glu-222. A Mn(2+)-binding site is contributed by Glu-222.

The protein belongs to the DXR family. Requires Mg(2+) as cofactor. Mn(2+) serves as cofactor.

It catalyses the reaction 2-C-methyl-D-erythritol 4-phosphate + NADP(+) = 1-deoxy-D-xylulose 5-phosphate + NADPH + H(+). It participates in isoprenoid biosynthesis; isopentenyl diphosphate biosynthesis via DXP pathway; isopentenyl diphosphate from 1-deoxy-D-xylulose 5-phosphate: step 1/6. In terms of biological role, catalyzes the NADPH-dependent rearrangement and reduction of 1-deoxy-D-xylulose-5-phosphate (DXP) to 2-C-methyl-D-erythritol 4-phosphate (MEP). The protein is 1-deoxy-D-xylulose 5-phosphate reductoisomerase of Mycolicibacterium smegmatis (strain ATCC 700084 / mc(2)155) (Mycobacterium smegmatis).